The sequence spans 313 residues: UDP-glucose 4-epimerase (313 aa).

NAD(+)-binding positions include 11 to 12, 31 to 36, 56 to 57, and 77 to 81; these read FI, DDLSSG, DI, and LAAQI. Residues serine 121 and tyrosine 146 each coordinate substrate. NAD(+) is bound by residues tyrosine 146 and lysine 150. The active-site Proton acceptor is tyrosine 146. Residues asparagine 175, 189 to 190, 204 to 206, arginine 213, and 271 to 274 each bind substrate; these read VV, KIF, and RLGD.

Belongs to the NAD(P)-dependent epimerase/dehydratase family. Homodimer. It depends on NAD(+) as a cofactor.

It carries out the reaction UDP-alpha-D-glucose = UDP-alpha-D-galactose. Its pathway is carbohydrate metabolism; galactose metabolism. Its function is as follows. Involved in the metabolism of galactose. Catalyzes the conversion of UDP-galactose (UDP-Gal) to UDP-glucose (UDP-Glc) through a mechanism involving the transient reduction of NAD. The chain is UDP-glucose 4-epimerase from Mycolicibacterium smegmatis (strain ATCC 700084 / mc(2)155) (Mycobacterium smegmatis).